The following is a 912-amino-acid chain: MTVKKLENSSDVNVVTEEVKILTNLLNESTEQLIGKELFTKIQNLIKISADKNYQELEDQIASLDNREMIVVARYFATLPLLINISEDVELASKVNVLNNTNQDYLGKLNDTIDIVAQKKNAKEILEKVNVVPVLTAHPTQVQRKTVLELTDKIHKLLRNYREVKNGIITRVEWTEELRACIEILMQTDIIRSHKLKVSNEITNVLTYYPKSLIPAITKFTARYKELAKKHGLDIPDATPITMGMWIGGDRDGNPYVTADTLKLSATLQGQVIFEYYIKQINQLYRSISLSTSYMKPSTEVMHLSELSNDDSPFRTNEPYRRAFYYIESRLVRSEQKLLNITNQHSFLKERDLEHLDQIPAYEDAQEFKADLEVIKRSLEENRDQAVVKSYFTEILEAIDVFGFHLATIDMRQDSSVNEACVAELLKSAEICDHYSELSEKEKVSLLLNELNNDPRNLHTNNKPKSELLQKELKIYKTARDLKDRLGEDLIKQHIISHTESVSDMLEQAIMLKEYDLLDNQSARVQVVPLFETVEDLNNARDIIKEYLNLDIVKKWLVSQHNYQEVMLGYSDSNKDGGYLASCWNLYKAQKDLTAIGEELGIKITYMHGRGGTVGRGGGPSYEAITAQPFNSINDRIRMTEQGEIIQNKYGNKDAAYYNLEMLVSATVDRIASKQIVSEEYIADFRSSMDKIVTESNEIYKKLVFENPNFLDYFLQATPIKEISNLNIGSRPASRKKLSDFSSLRAIPWVFSWSQSRVMFPGWYGVGSAFKHFIDADKKNLQELQHMYQGWPFFHALLSNADMVLSKSNMEIAKQYAELCQDEKTKSVFDIIYQEWKLTKQIILQIEGHDDLLSDAPNLKNSLASRMPYFNILNYIQLEMIKRDREDEIKGVFQSIIPITINGVASGLRNSG.

Residues histidine 138 and lysine 575 contribute to the active site.

This sequence belongs to the PEPCase type 1 family. The cofactor is Mg(2+).

It carries out the reaction oxaloacetate + phosphate = phosphoenolpyruvate + hydrogencarbonate. Functionally, forms oxaloacetate, a four-carbon dicarboxylic acid source for the tricarboxylic acid cycle. The protein is Phosphoenolpyruvate carboxylase of Lactobacillus helveticus (strain DPC 4571).